The following is a 247-amino-acid chain: Probable transcriptional regulatory protein Spro_2779 (247 aa).

The protein belongs to the TACO1 family.

It localises to the cytoplasm. The polypeptide is Probable transcriptional regulatory protein Spro_2779 (Serratia proteamaculans (strain 568)).